The chain runs to 232 residues: Phosphoribosylformylglycinamidine synthase subunit PurQ (232 aa).

In terms of domain architecture, Glutamine amidotransferase type-1 spans 2–232 (KIAILQFGGT…SMVDYITENF (231 aa)). Cysteine 86 acts as the Nucleophile in catalysis. Catalysis depends on residues histidine 203 and glutamate 205.

As to quaternary structure, part of the FGAM synthase complex composed of 1 PurL, 1 PurQ and 2 PurS subunits.

The protein localises to the cytoplasm. The catalysed reaction is N(2)-formyl-N(1)-(5-phospho-beta-D-ribosyl)glycinamide + L-glutamine + ATP + H2O = 2-formamido-N(1)-(5-O-phospho-beta-D-ribosyl)acetamidine + L-glutamate + ADP + phosphate + H(+). The enzyme catalyses L-glutamine + H2O = L-glutamate + NH4(+). Its pathway is purine metabolism; IMP biosynthesis via de novo pathway; 5-amino-1-(5-phospho-D-ribosyl)imidazole from N(2)-formyl-N(1)-(5-phospho-D-ribosyl)glycinamide: step 1/2. Its function is as follows. Part of the phosphoribosylformylglycinamidine synthase complex involved in the purines biosynthetic pathway. Catalyzes the ATP-dependent conversion of formylglycinamide ribonucleotide (FGAR) and glutamine to yield formylglycinamidine ribonucleotide (FGAM) and glutamate. The FGAM synthase complex is composed of three subunits. PurQ produces an ammonia molecule by converting glutamine to glutamate. PurL transfers the ammonia molecule to FGAR to form FGAM in an ATP-dependent manner. PurS interacts with PurQ and PurL and is thought to assist in the transfer of the ammonia molecule from PurQ to PurL. The sequence is that of Phosphoribosylformylglycinamidine synthase subunit PurQ from Methanosarcina barkeri (strain Fusaro / DSM 804).